The chain runs to 875 residues: Phosphatidylethanolamine N-methyltransferase (875 aa).

The Lumenal segment spans residues 1-42 (MKETKVQNTIAGAKGITFSGDTFVVPETHDMVKTLFDPMVRK). Residues 43–63 (SYCEMIILLILAANGLVFWLI) traverse the membrane as a helical segment. The Cytoplasmic segment spans residues 64-71 (NNNTLRIE). Residues 72-92 (TFIGLYIFWRLSYNFGIGYLL) traverse the membrane as a helical segment. Residues 93–152 (NVQSNHHRLVKWARKAQVFKKNGSLVSRLAEKEIKSQMGPEYDVQKYPIEFNTWLLFRKV) lie on the Lumenal side of the membrane. The helical transmembrane segment at 153-173 (VDLILMSDFTTFICLVVVCAI) threads the bilayer. The Cytoplasmic portion of the chain corresponds to 174 to 186 (NKDYQFINSDQQE). The helical transmembrane segment at 187-207 (VWLISTRLILGTVLILFNLWV) threads the bilayer. Residues 208–242 (KVNAHNTIKDYAWYWGDFFFRQINNEDLIFDGVFE) lie on the Lumenal side of the membrane. The chain crosses the membrane as a helical span at residues 243 to 263 (MVPHPMYSVGYVGYYGFAIIS). At 264–265 (KS) the chain is on the cytoplasmic side. A helical transmembrane segment spans residues 266–286 (YTILTVAIFGHFLQMIFLHYI). Residues 287–338 (ENPHIDKIYGPSGNEADIEMLLKLKDLRHFDNIKPLVGLLNFTWLRASDMTN) lie on the Lumenal side of the membrane. Residues 339–359 (LIMVGTYSFTIPYLASLVDTV) traverse the membrane as a helical segment. Residues 360 to 370 (RVGETGVNPGT) lie on the Cytoplasmic side of the membrane. A helical membrane pass occupies residues 371–391 (ILFILTIVIKVFESLSINILL). At 392 to 424 (ILQSYYKTFTKWYLSNDISVEKTLNNWSIMYNS) the chain is on the lumenal side. A helical membrane pass occupies residues 425 to 445 (LISLTYSSFFGLNFYHVLIGL). The Cytoplasmic portion of the chain corresponds to 446–459 (ESDKLFINSWVYLR). Residues 460–480 (IFLGILLVFTQVWINSSIIDS) traverse the membrane as a helical segment. Residues 481-517 (IGYFGWFYGDFFIPKTSQQKAHLTKAGVYRYLNNPEQ) lie on the Lumenal side of the membrane. The helical transmembrane segment at 518–538 (IFGVCGIMGVTLIIPSLENLI) threads the bilayer. Over 539 to 875 (CCVLWVTNNF…YPLSEEKKEE (337 aa)) the chain is Cytoplasmic.

Belongs to the class VI-like SAM-binding methyltransferase superfamily. CHO2 family.

The protein localises to the endoplasmic reticulum membrane. It carries out the reaction a 1,2-diacyl-sn-glycero-3-phosphoethanolamine + S-adenosyl-L-methionine = a 1,2-diacyl-sn-glycero-3-phospho-N-methylethanolamine + S-adenosyl-L-homocysteine + H(+). It functions in the pathway phospholipid metabolism; phosphatidylcholine biosynthesis. In terms of biological role, catalyzes the first step of the methylation pathway of phosphatidylcholine biosynthesis, the SAM-dependent methylation of phosphatidylethanolamine (PE) to phosphatidylmonomethylethanolamine (PMME). This Debaryomyces hansenii (strain ATCC 36239 / CBS 767 / BCRC 21394 / JCM 1990 / NBRC 0083 / IGC 2968) (Yeast) protein is Phosphatidylethanolamine N-methyltransferase (CHO2).